Reading from the N-terminus, the 73-residue chain is Dermaseptin-H4 (73 aa).

Residues 1-22 form the signal peptide; sequence MAFMKKSLFLVLFLGMVSLSIC. Residues 23-43 constitute a propeptide that is removed on maturation; that stretch reads EEEKRENEDEAKQEDDEQSEM. A disordered region spans residues 25 to 45; sequence EKRENEDEAKQEDDEQSEMKR. Residues 30-40 show a composition bias toward acidic residues; that stretch reads EDEAKQEDDEQ. Leu70 carries the leucine amide modification. A propeptide spanning residues 72–73 is cleaved from the precursor; that stretch reads EQ.

In terms of tissue distribution, expressed by the skin glands.

The protein localises to the secreted. Its function is as follows. Has antibacterial activity against the Gram-negative bacteria E.coli ATCC 11775 (MIC=0.8 uM), and the Gram-positive bacteria S.aureus ATCC 12600 (MIC=0.4 uM) and M.luteus ATCC 49732 (MIC=0.8 uM). Does not inhibit the growth of the fungus C.albicans. Probably acts by disturbing membrane functions with its amphipathic structure. This is Dermaseptin-H4 from Pithecopus azureus (Orange-legged monkey tree frog).